We begin with the raw amino-acid sequence, 139 residues long: Putative pre-16S rRNA nuclease (139 aa).

Belongs to the YqgF nuclease family.

It localises to the cytoplasm. Functionally, could be a nuclease involved in processing of the 5'-end of pre-16S rRNA. The chain is Putative pre-16S rRNA nuclease from Haemophilus influenzae (strain PittEE).